The primary structure comprises 185 residues: Ribonuclease HII (185 aa).

Positions 1-185 constitute an RNase H type-2 domain; the sequence is MKICGIDEAG…LKHLQGILEF (185 aa). A divalent metal cation is bound by residues Asp-7, Glu-8, and Asp-96.

It belongs to the RNase HII family. Requires Mn(2+) as cofactor. Mg(2+) is required as a cofactor.

It localises to the cytoplasm. The catalysed reaction is Endonucleolytic cleavage to 5'-phosphomonoester.. Its function is as follows. Endonuclease that specifically degrades the RNA of RNA-DNA hybrids. The sequence is that of Ribonuclease HII from Campylobacter hominis (strain ATCC BAA-381 / DSM 21671 / CCUG 45161 / LMG 19568 / NCTC 13146 / CH001A).